The primary structure comprises 520 residues: MSQDNDTLMRDILGHELAAMRLQKLEQQRRLFEKKQRQKRQELLMVQANPDASPWLWRSCLREERLLGDRGLGNPFLRKKVSEAHLPSGIHSALGTVSCGGDGRGERGLPTPRTEAVFRNLGLQSPFLSWLPDNSDAELEEVSVENGSVSPPPFKQSPRIRRKGWQAHQRPGTRAEGESDSQDMGDAHKSPNMGPNPGMDGDCVYENLAFQKEEDLEKKREASESTGTNSSAAHNEELSKALKGEGGTDSDHMRHEASLAIRSPCPGLEEDMEAYVLRPALPGTMMQCYLTRDKHGVDKGLFPLYYLYLETSDSLQRFLLAGRKRRRSKTSNYLISLDPTHLSRDGDNFVGKVRSNVFSTKFTIFDNGVNPDREHLTRNTARIRQELGAVCYEPNVLGYLGPRKMTVILPGTNSQNQRINVQPLNEQESLLSRYQRGDKQGLLLLHNKTPSWDKENGVYTLNFHGRVTRASVKNFQIVDPKHQEHLVLQFGRVGPDTFTMDFCFPFSPLQAFSICLSSFN.

A phosphoserine mark is found at Ser-135 and Ser-190. The interval 141–236 is disordered; the sequence is EVSVENGSVS…GTNSSAAHNE (96 aa). Over residues 211–223 the composition is skewed to basic and acidic residues; that stretch reads QKEEDLEKKREAS. Polar residues predominate over residues 224–233; sequence ESTGTNSSAA.

This sequence belongs to the TUB family. Strongly expressed in testis. Also expressed in retina. Expressed in cancer cell lines.

It is found in the cytoplasm. It localises to the secreted. The protein is Tubby-related protein 2 (TULP2) of Homo sapiens (Human).